The following is a 372-amino-acid chain: 4-hydroxy-3-methylbut-2-en-1-yl diphosphate synthase (flavodoxin) (372 aa).

4 residues coordinate [4Fe-4S] cluster: Cys270, Cys273, Cys305, and Glu312.

This sequence belongs to the IspG family. It depends on [4Fe-4S] cluster as a cofactor.

The catalysed reaction is (2E)-4-hydroxy-3-methylbut-2-enyl diphosphate + oxidized [flavodoxin] + H2O + 2 H(+) = 2-C-methyl-D-erythritol 2,4-cyclic diphosphate + reduced [flavodoxin]. Its pathway is isoprenoid biosynthesis; isopentenyl diphosphate biosynthesis via DXP pathway; isopentenyl diphosphate from 1-deoxy-D-xylulose 5-phosphate: step 5/6. Functionally, converts 2C-methyl-D-erythritol 2,4-cyclodiphosphate (ME-2,4cPP) into 1-hydroxy-2-methyl-2-(E)-butenyl 4-diphosphate. The sequence is that of 4-hydroxy-3-methylbut-2-en-1-yl diphosphate synthase (flavodoxin) from Shewanella amazonensis (strain ATCC BAA-1098 / SB2B).